Consider the following 431-residue polypeptide: uncharacterized protein (431 aa).

This is an uncharacterized protein from Acanthamoeba polyphaga mimivirus (APMV).